The sequence spans 94 residues: Parvalbumin beta 4 (94 aa).

N-acetylalanine is present on Ala1. 2 consecutive EF-hand domains span residues 36 to 63 (FFAIIDQDHSGFIEEEELKLFLQTFSAG) and 67 to 94 (LSDAETKTFLAAGDVDGDGMIGVDEFAA). Positions 41, 43, 45, 47, 49, 52, 80, 82, 84, 86, and 91 each coordinate Ca(2+).

It belongs to the parvalbumin family.

Its function is as follows. In muscle, parvalbumin is thought to be involved in relaxation after contraction. It binds two calcium ions. This Merluccius bilinearis (Silver hake) protein is Parvalbumin beta 4.